Consider the following 246-residue polypeptide: Octanoyltransferase (246 aa).

Positions Gly30–Val227 constitute a BPL/LPL catalytic domain. Substrate is bound by residues Arg75–His82, Ala155–Gly157, and Gly168–Ala170. Cys186 (acyl-thioester intermediate) is an active-site residue.

This sequence belongs to the LipB family.

The protein localises to the cytoplasm. The enzyme catalyses octanoyl-[ACP] + L-lysyl-[protein] = N(6)-octanoyl-L-lysyl-[protein] + holo-[ACP] + H(+). It participates in protein modification; protein lipoylation via endogenous pathway; protein N(6)-(lipoyl)lysine from octanoyl-[acyl-carrier-protein]: step 1/2. Functionally, catalyzes the transfer of endogenously produced octanoic acid from octanoyl-acyl-carrier-protein onto the lipoyl domains of lipoate-dependent enzymes. Lipoyl-ACP can also act as a substrate although octanoyl-ACP is likely to be the physiological substrate. This Acidobacterium capsulatum (strain ATCC 51196 / DSM 11244 / BCRC 80197 / JCM 7670 / NBRC 15755 / NCIMB 13165 / 161) protein is Octanoyltransferase.